A 144-amino-acid polypeptide reads, in one-letter code: Large ribosomal subunit protein uL14 (144 aa).

The interval 107–144 (NEGYTHSQHSNQREGGERIQAQPSPPHARRAVKTSFCR) is disordered.

Belongs to the universal ribosomal protein uL14 family. In terms of assembly, part of the 50S ribosomal subunit. Forms a cluster with proteins L3 and L19. In the 70S ribosome, L14 and L19 interact and together make contacts with the 16S rRNA in bridges B5 and B8.

Functionally, binds to 23S rRNA. Forms part of two intersubunit bridges in the 70S ribosome. This Xanthobacter autotrophicus (strain ATCC BAA-1158 / Py2) protein is Large ribosomal subunit protein uL14.